Here is a 2230-residue protein sequence, read N- to C-terminus: DNA polymerase epsilon catalytic subunit A (2230 aa).

Positions 1–19 (MPTRQPSKYGNKFRSSSAS) are enriched in polar residues. The tract at residues 1-24 (MPTRQPSKYGNKFRSSSASFKPKR) is disordered. Zn(2+) contacts are provided by C2101, C2104, C2136, and C2139. A CysA-type zinc finger spans residues 2101–2139 (CNACCLIRDLDLCRDEDVLPEMGSDPNKAAPKPWRCPFC). Residues C2170, C2173, C2185, and C2187 each coordinate [4Fe-4S] cluster. Positions 2170–2187 (CSKCGGLKISDFMEHCSC) match the CysB motif motif.

The protein belongs to the DNA polymerase type-B family. In terms of assembly, heterotetramer. Consists of 4 subunits: pol2, dpb2, dpb3 and dpb4. The cofactor is [4Fe-4S] cluster.

The protein resides in the nucleus. It carries out the reaction DNA(n) + a 2'-deoxyribonucleoside 5'-triphosphate = DNA(n+1) + diphosphate. Its function is as follows. DNA polymerase II participates in chromosomal DNA replication. In Aspergillus fumigatus (strain ATCC MYA-4609 / CBS 101355 / FGSC A1100 / Af293) (Neosartorya fumigata), this protein is DNA polymerase epsilon catalytic subunit A (pol2).